Consider the following 528-residue polypeptide: Dihydromonacolin L monooxygenase LovA (528 aa).

Residues 1-23 (MTVDALTQPHHLLSLAWNDTQQH) lie on the Cytoplasmic side of the membrane. The helical; Signal-anchor for type II membrane protein transmembrane segment at 24–44 (GSWFAPLVTTSAGLLCLLLYL) threads the bilayer. Residues 45-528 (CSSGRRSDLP…DEDIRLPGSL (484 aa)) are Lumenal-facing. Residue cysteine 465 coordinates heme.

The protein belongs to the cytochrome P450 family. The cofactor is heme.

The protein resides in the membrane. It is found in the endoplasmic reticulum membrane. It carries out the reaction dihydromonacolin L carboxylate + reduced [NADPH--hemoprotein reductase] + O2 = monacolin L carboxylate + oxidized [NADPH--hemoprotein reductase] + 2 H2O + H(+). The enzyme catalyses monacolin L carboxylate + reduced [NADPH--hemoprotein reductase] + O2 = monacolin J carboxylate + oxidized [NADPH--hemoprotein reductase] + H2O + H(+). It participates in polyketide biosynthesis; lovastatin biosynthesis. Functionally, dihydromonacolin L monooxygenase; part of the gene cluster that mediates the biosynthesis of lovastatin (also known as mevinolin, mevacor or monacolin K), a hypolipidemic inhibitor of (3S)-hydroxymethylglutaryl-coenzyme A (HMG-CoA) reductase (HMGR). The first step in the biosynthesis of lovastatin is the production of dihydromonacolin L acid by the lovastatin nonaketide synthase lovB and the trans-acting enoyl reductase lovC via condensation of one acetyl-CoA unit and 8 malonyl-CoA units. Dihydromonacolin L acid is released from lovB by the thioesterase lovG. Next, dihydromonacolin L acid is oxidized by the dihydromonacolin L monooxygenase lovA twice to form monacolin J acid. The 2-methylbutyrate moiety of lovastatin is synthesized by the lovastatin diketide synthase lovF via condensation of one acetyl-CoA unit and one malonyl-CoA unit. Finally, the covalent attachment of this moiety to monacolin J acid is catalyzed by the transesterase lovD to yield lovastatin. LovD has broad substrate specificity and can also convert monacolin J to simvastatin using alpha-dimethylbutanoyl-S-methyl-3-mercaptopropionate (DMB-S-MMP) as the thioester acyl donor, and can also catalyze the reverse reaction and function as hydrolase in vitro. LovD has much higher activity with LovF-bound 2-methylbutanoate than with free diketide substrates. This Aspergillus terreus protein is Dihydromonacolin L monooxygenase LovA.